A 156-amino-acid polypeptide reads, in one-letter code: Calmodulin (156 aa).

Ser-2 bears the N-acetylserine mark. 4 EF-hand domains span residues 15 to 50 (EQIA…LGQN), 51 to 86 (PTEA…KMKD), 88 to 123 (DSEE…LGEK), and 124 to 156 (LTDE…MTSK). Positions 28, 30, 32, 34, 39, 64, 66, 68, 70, 75, 101, 103, 105, and 112 each coordinate Ca(2+). An N6,N6,N6-trimethyllysine modification is found at Lys-123. Positions 137, 139, 141, 143, and 148 each coordinate Ca(2+).

It belongs to the calmodulin family.

Its function is as follows. Calmodulin mediates the control of a large number of enzymes, ion channels and other proteins by Ca(2+). Among the enzymes to be stimulated by the calmodulin-Ca(2+) complex are a number of protein kinases and phosphatases. This Strongylocentrotus intermedius (Sea urchin) protein is Calmodulin.